We begin with the raw amino-acid sequence, 298 residues long: Mitochondrial 2-oxodicarboxylate carrier (298 aa).

3 Solcar repeats span residues 10-99 (HETC…YKKF), 106-195 (SPGL…VKDN), and 204-293 (LEFL…TYAW). Helical transmembrane passes span 16-36 (VAAG…LDVV), 69-88 (FGFY…KRAV), 112-132 (PIAG…FEVV), 166-186 (GLNK…MTYF), 204-224 (LEFL…SVFN), and 276-296 (LGPG…WLQE).

The protein belongs to the mitochondrial carrier (TC 2.A.29) family. As to expression, widely expressed.

The protein resides in the mitochondrion inner membrane. The enzyme catalyses 2-oxoadipate(in) + 2-oxoglutarate(out) = 2-oxoadipate(out) + 2-oxoglutarate(in). The catalysed reaction is hexanedioate(in) + 2-oxoglutarate(out) = hexanedioate(out) + 2-oxoglutarate(in). It carries out the reaction L-2-aminoadipate(in) + 2-oxoglutarate(out) = L-2-aminoadipate(out) + 2-oxoglutarate(in). It catalyses the reaction glutarate(in) + 2-oxoglutarate(out) = glutarate(out) + 2-oxoglutarate(in). The enzyme catalyses 2-oxoheptanedioate(in) + 2-oxoglutarate(out) = 2-oxoheptanedioate(out) + 2-oxoglutarate(in). The catalysed reaction is heptanedioate(in) + 2-oxoglutarate(out) = heptanedioate(out) + 2-oxoglutarate(in). It carries out the reaction citrate(in) + 2-oxoglutarate(out) = citrate(out) + 2-oxoglutarate(in). Transports dicarboxylates across the inner membranes of mitochondria by a counter-exchange mechanism. Can transport 2-oxoadipate (2-oxohexanedioate), 2-oxoglutarate, adipate (hexanedioate), glutarate, and to a lesser extent, pimelate (heptanedioate), 2-oxopimelate (2-oxoheptanedioate), 2-aminoadipate (2-aminohexanedioate), oxaloacetate, and citrate. Plays a central role in catabolism of lysine, hydroxylysine, and tryptophan, by transporting common metabolite intermediates (such as 2-oxoadipate) into the mitochondria, where it is converted into acetyl-CoA and can enter the citric acid (TCA) cycle. The protein is Mitochondrial 2-oxodicarboxylate carrier (Slc25a21) of Rattus norvegicus (Rat).